We begin with the raw amino-acid sequence, 346 residues long: Integrin beta-1-binding protein 2 (346 aa).

Zn(2+)-binding residues include Cys-5, Cys-10, Cys-24, and His-27. A CHORD 1 domain is found at 5 to 64 (CHNKGCGQHFDPQTNLPDSCCHHPGVPVFHDALKGWSCCRKRTVDFSEFLNIKGCTVGPH). Residues 28–31 (PGVP) carry the SH3-binding motif. Zn(2+) contacts are provided by Cys-42, Cys-43, Cys-59, and His-64. The short motif at 70–78 (PEAPQPEGP) is the SH3-binding element. Residues 70 to 113 (PEAPQPEGPATSSSLLEQKPPNTIPKSAETLRRERPKSDLPPKL) form a disordered region. Over residues 79-94 (ATSSSLLEQKPPNTIP) the composition is skewed to polar residues. Over residues 98 to 109 (ETLRRERPKSDL) the composition is skewed to basic and acidic residues. Residues Cys-150 and Cys-155 each coordinate Zn(2+). The region spanning 150–209 (CQNPGCDAVYQGSESDATPCTYHPGAPRFHEGMKSWSCCGIQTLDFGVFLAQPGCRVGRH) is the CHORD 2 domain. The SH2-binding signature appears at 159–162 (YQGS). Positions 169 and 172 each coordinate Zn(2+). Positions 173-176 (PGAP) match the SH3-binding motif. Zn(2+) is bound by residues Cys-187, Cys-188, Cys-204, and His-209. A CS domain is found at 216–305 (LASCRHDWHQ…ADPGFWAQLE (90 aa)). The SH2-binding motif lies at 235-238 (YGQI). Residues 311 to 346 (AEKSKSGVGLEMDEEESEDSDDDLSWTEEEEEAMGE) form a disordered region. The segment covering 321-346 (EMDEEESEDSDDDLSWTEEEEEAMGE) has biased composition (acidic residues).

In terms of assembly, interacts with beta-1 integrin subunit. This interaction is regulated by divalent cations, and it occurs only in absence of calcium.

Functionally, may play a role during maturation and/or organization of muscles cells. In Sus scrofa (Pig), this protein is Integrin beta-1-binding protein 2 (ITGB1BP2).